The following is a 206-amino-acid chain: Large ribosomal subunit protein uL4 (206 aa).

The segment at 47 to 94 is disordered; the sequence is NRAQKGRSEIAKSTRKPFRQKGTGNARAGMASSPLWRGGGKIFPNSPD.

This sequence belongs to the universal ribosomal protein uL4 family. As to quaternary structure, part of the 50S ribosomal subunit.

One of the primary rRNA binding proteins, this protein initially binds near the 5'-end of the 23S rRNA. It is important during the early stages of 50S assembly. It makes multiple contacts with different domains of the 23S rRNA in the assembled 50S subunit and ribosome. In terms of biological role, forms part of the polypeptide exit tunnel. In Azoarcus sp. (strain BH72), this protein is Large ribosomal subunit protein uL4.